The primary structure comprises 1081 residues: Protein QUIRKY (1081 aa).

Residues 1 to 124 (MNTTPFHSDP…SRRGEEGLVY (124 aa)) enclose the C2 1 domain. Disordered stretches follow at residues 154–198 (DTAG…MNIP) and 238–323 (PQHV…MEKK). Residues 163–176 (QQQQQQQQFHPPQQ) show a composition bias toward low complexity. Residues 248-257 (NHPHRNDNHP) show a composition bias toward basic and acidic residues. Pro residues predominate over residues 258–268 (QRPPSPPPPPS). 3 consecutive C2 domains span residues 318-440 (TTME…PQWY), 477-605 (SSDA…SKWH), and 652-778 (VCSD…TNSY). The Ca(2+) site is built by glutamate 351, serine 352, aspartate 408, and serine 413. 3 consecutive transmembrane segments (helical) span residues 879-899 (WYRIVGVLAWAVGLAKWLDNI), 916-936 (LVLVWYPDLVVPTAFLYVVMI), and 1024-1044 (LFIAICLVITIVLYAVPAKMV).

It belongs to the MCTP family. As to quaternary structure, interacts with SUB/SCM and POQ at the plasma membrane. Binds to SUB/SCM at plasmodesmata (PD) in root epidermal cells to promote tissue morphogenesis. Ca(2+) is required as a cofactor. Observed mainly in flowers, and, to a lower extent, in seedlings, roots, shoots, leaves, stems and inflorescences. Expressed in the vascular tissues of roots, cotyledons and rosette leaves. Accumulates in roots meristems.

The protein resides in the cell membrane. The protein localises to the cytoplasm. It localises to the golgi apparatus membrane. It is found in the cell junction. Its subcellular location is the plasmodesma. In terms of biological role, may be involved in Ca 2(+)-dependent signaling and membrane trafficking. Plays a role in fruit dehiscence. Components of the machinery involved in organ development mediated by the receptor-like kinase STRUBBELIG (SUB). Collaboratively with SUB and POQ, regulates cell growth anisotropy during gynoecium development, thus linking together cell-cell communication and cellular growth. Together with SUB/SCM, links RLK-dependent signal transduction and intercellular communication mediated by plasmodesmata (PD) to regulate tissue morphogenesis. May function as a signaling molecule by regulating the trafficking of other regulators. The polypeptide is Protein QUIRKY (Arabidopsis thaliana (Mouse-ear cress)).